A 203-amino-acid polypeptide reads, in one-letter code: Putative 3-methyladenine DNA glycosylase (203 aa).

Belongs to the DNA glycosylase MPG family.

The protein is Putative 3-methyladenine DNA glycosylase of Clostridium beijerinckii (strain ATCC 51743 / NCIMB 8052) (Clostridium acetobutylicum).